The following is a 261-amino-acid chain: 8-demethyl-8-(2,3-dimethoxy-alpha-L-rhamnosyl)-tetracenomycin-C 4'-O-methyltransferase (261 aa).

S-adenosyl-L-methionine is bound by residues 53–54 (TM), 81–85 (ETGVW), 111–115 (DSFEG), Phe-167, 185–186 (DG), and Ser-191. Asp-185 contributes to the Mg(2+) binding site. Asp-212 and Asp-213 together coordinate Mg(2+).

Belongs to the methyltransferase TylF/MycF family. The cofactor is Mg(2+).

The catalysed reaction is 8-demethyl-8-(2,3-di-O-methyl-alpha-L-rhamnosyl)-tetracenomycin C + S-adenosyl-L-methionine = 8-demethyl-8-(2,3,4-tri-O-methyl-alpha-L-rhamnosyl)-tetracenomycin C + S-adenosyl-L-homocysteine + H(+). Its pathway is antibiotic biosynthesis. Functionally, O-methyltransferase involved in the biosynthesis of the permethylated L-rhamnose moiety of elloramycin, an antitumor polyketide. Mediates the methylation of the hydroxy groups at the 4'-position after the sugar moiety has been attached to the aglycon. The protein is 8-demethyl-8-(2,3-dimethoxy-alpha-L-rhamnosyl)-tetracenomycin-C 4'-O-methyltransferase of Streptomyces olivaceus.